The sequence spans 208 residues: GTP cyclohydrolase 1 (208 aa).

The Zn(2+) site is built by Cys89, His92, and Cys163.

This sequence belongs to the GTP cyclohydrolase I family. As to quaternary structure, homomer.

It carries out the reaction GTP + H2O = 7,8-dihydroneopterin 3'-triphosphate + formate + H(+). Its pathway is cofactor biosynthesis; 7,8-dihydroneopterin triphosphate biosynthesis; 7,8-dihydroneopterin triphosphate from GTP: step 1/1. This Saccharolobus islandicus (strain L.S.2.15 / Lassen #1) (Sulfolobus islandicus) protein is GTP cyclohydrolase 1.